We begin with the raw amino-acid sequence, 451 residues long: UDP-N-acetylmuramoylalanine--D-glutamate ligase (451 aa).

An ATP-binding site is contributed by G120–T126.

Belongs to the MurCDEF family.

The protein localises to the cytoplasm. It carries out the reaction UDP-N-acetyl-alpha-D-muramoyl-L-alanine + D-glutamate + ATP = UDP-N-acetyl-alpha-D-muramoyl-L-alanyl-D-glutamate + ADP + phosphate + H(+). The protein operates within cell wall biogenesis; peptidoglycan biosynthesis. Cell wall formation. Catalyzes the addition of glutamate to the nucleotide precursor UDP-N-acetylmuramoyl-L-alanine (UMA). This Bacillus pumilus (strain SAFR-032) protein is UDP-N-acetylmuramoylalanine--D-glutamate ligase.